We begin with the raw amino-acid sequence, 162 residues long: Caveolin-2 (162 aa).

Topologically, residues 1–86 (MGLETEKADV…FEMSKYVIYK (86 aa)) are cytoplasmic. Position 19 is a phosphotyrosine; by SRC (Tyr19). Phosphoserine is present on residues Ser20 and Ser23. Tyr27 carries the post-translational modification Phosphotyrosine; by SRC. Residues 87 to 107 (FLTVFLAIPLAFAAGILFATL) constitute an intramembrane region (helical). The Cytoplasmic segment spans residues 108 to 162 (SCLHIWIIMPFVKTCLMVLPSVQTIWKSVTDVVIAPLCTSIGRSFSSVSLQLSHD).

Belongs to the caveolin family. In terms of assembly, monomer or homodimer. Interacts with CAV1; the interaction forms a stable heterooligomeric complex that is required for targeting to lipid rafts and for caveolae formation. Tyrosine phosphorylated forms do not form heterooligomers with the Tyr-19-phosphorylated form existing as a monomer or dimer, and the Tyr-27-form as a monomer only. Interacts (tyrosine phosphorylated form) with the SH2 domain-containing proteins, RASA1, NCK1 and SRC. Interacts (tyrosine phosphorylated form) with INSR, the interaction (Tyr-27-phosphorylated form) is increased on insulin stimulation. Interacts (Tyr-19 phosphorylated form) with MAPK1 (phosphorylated form); the interaction, promoted by insulin, leads to nuclear location and MAPK1 activation. Interacts with STAT3; the interaction is increased on insulin-induced tyrosine phosphorylation leading to STAT activation. In terms of processing, phosphorylated on serine and tyrosine residues. CAV1 promotes phosphorylation on Ser-23 which then targets the complex to the plasma membrane, lipid rafts and caveolae. Phosphorylation on both Tyr-19 and Tyr-27 is required for insulin-induced 'Ser-727' phosphorylation of STAT3 and its activation. Phosphorylation on Tyr-19 is required for insulin-induced phosphorylation of MAPK1 and DNA binding of STAT3. Tyrosine phosphorylation is induced by both EGF and insulin. In terms of tissue distribution, expressed in aortic endothelial cells.

Its subcellular location is the nucleus. The protein localises to the cytoplasm. It localises to the golgi apparatus membrane. It is found in the cell membrane. The protein resides in the membrane. Its subcellular location is the caveola. Its function is as follows. May act as a scaffolding protein within caveolar membranes. Interacts directly with G-protein alpha subunits and can functionally regulate their activity. Acts as an accessory protein in conjunction with CAV1 in targeting to lipid rafts and driving caveolae formation. Positive regulator of cellular mitogenesis of the MAPK signaling pathway. Required for the insulin-stimulated nuclear translocation and activation of MAPK1 and STAT3, and the subsequent regulation of cell cycle progression. The protein is Caveolin-2 (CAV2) of Bos taurus (Bovine).